The sequence spans 452 residues: MDTATKTGYADVLVGLQYGDEGKARVVDHLAAGYDVIARFNGGANAGHTIATSEGILRLRQVPSGVLHPRVSLYIGSGCVIGLRQLASEIEMLAGQGIDLAGRLTISDRCPVVQPAHFLSDRRDGGRIGTTGNGIGPCYADLAARMRGGERSAFQLCDLMRDESRVFEQMMRLAAQRDDEDIAVLIQEMRQAWQVVRPFVTDNPVALLERVEGGARVLFEGAQSVMLDVVQGAQPWVTSSHTLPSYAYVGGDLPCRYHRKTIGVAKAMVSRVGSGPLPTELGAERSEAYCADAGREGRGRADEAARFDPRALLAQGDAFSTGIAIRMLSNEYGTGTGRPRRVGLLDVAQLQLAIRQFGVDEVYLNKCDSLAVFAQTRDRCIPVVVGSRDGNAMHVMRFPAFDESVIPRDDATPLPPQLETLLEWLADVLGRPLRGIGLGPQRAQMRLFKTQP.

GTP contacts are provided by residues 19-25 (GDEGKAR) and 47-49 (GHT). D20 functions as the Proton acceptor in the catalytic mechanism. Mg(2+) contacts are provided by D20 and G47. IMP contacts are provided by residues 20–23 (DEGK), 45–48 (NAGH), T131, R145, Q223, T238, and R338. Residue H48 is the Proton donor of the active site. Substrate is bound at residue 334 to 340 (TGTGRPR). GTP is bound by residues R340, 366 to 368 (KCD), and 437 to 439 (GLG).

This sequence belongs to the adenylosuccinate synthetase family. Homodimer. Requires Mg(2+) as cofactor.

The protein localises to the cytoplasm. It catalyses the reaction IMP + L-aspartate + GTP = N(6)-(1,2-dicarboxyethyl)-AMP + GDP + phosphate + 2 H(+). Its pathway is purine metabolism; AMP biosynthesis via de novo pathway; AMP from IMP: step 1/2. In terms of biological role, plays an important role in the de novo pathway of purine nucleotide biosynthesis. Catalyzes the first committed step in the biosynthesis of AMP from IMP. The sequence is that of Adenylosuccinate synthetase 2 from Cupriavidus pinatubonensis (strain JMP 134 / LMG 1197) (Cupriavidus necator (strain JMP 134)).